Here is a 231-residue protein sequence, read N- to C-terminus: 7-cyano-7-deazaguanine synthase (231 aa).

8–18 (FSGGQDSTTCL) contacts ATP. The Zn(2+) site is built by Cys188, Cys197, Cys200, and Cys203.

This sequence belongs to the QueC family. It depends on Zn(2+) as a cofactor.

The enzyme catalyses 7-carboxy-7-deazaguanine + NH4(+) + ATP = 7-cyano-7-deazaguanine + ADP + phosphate + H2O + H(+). Its pathway is purine metabolism; 7-cyano-7-deazaguanine biosynthesis. In terms of biological role, catalyzes the ATP-dependent conversion of 7-carboxy-7-deazaguanine (CDG) to 7-cyano-7-deazaguanine (preQ(0)). This is 7-cyano-7-deazaguanine synthase from Salmonella agona (strain SL483).